The chain runs to 499 residues: Tektin-like protein 1 (499 aa).

2 coiled-coil regions span residues serine 197–leucine 227 and leucine 297–asparagine 317. Phosphotyrosine is present on tyrosine 372.

In terms of assembly, microtubule inner protein component of sperm flagellar doublet microtubules.

Its subcellular location is the cytoplasm. The protein resides in the cytoskeleton. The protein localises to the flagellum axoneme. In terms of biological role, microtubule inner protein (MIP) part of the dynein-decorated doublet microtubules (DMTs) in sperm flagellar axoneme, which is required for motile flagellum beating. Forms an extensive interaction network cross-linking the lumen of axonemal doublet microtubules. The protein is Tektin-like protein 1 of Homo sapiens (Human).